A 554-amino-acid polypeptide reads, in one-letter code: Probable pectinesterase/pectinesterase inhibitor 6 (554 aa).

The first 32 residues, 1-32 (MDHKILLTPPKSLYTKCIITIIYVVSISHLNA), serve as a signal peptide directing secretion. Residues 29-183 (HLNAHFITSC…TKSISNSLAV (155 aa)) form a pectinesterase inhibitor 6 region. N-linked (GlcNAc...) asparagine glycans are attached at residues asparagine 119 and asparagine 172. Residues 250–540 (DLVVAKDGSG…FTVENFLDGN (291 aa)) form a pectinesterase 6 region. Residues threonine 327 and glutamine 357 each contribute to the substrate site. Catalysis depends on aspartate 380, which acts as the Proton donor; for pectinesterase activity. The cysteines at positions 394 and 414 are disulfide-linked. Aspartate 401 (nucleophile; for pectinesterase activity) is an active-site residue. Substrate contacts are provided by arginine 460 and tryptophan 462.

This sequence in the N-terminal section; belongs to the PMEI family. In the C-terminal section; belongs to the pectinesterase family. As to expression, expressed in rosette leaves, flower and siliques.

The protein localises to the secreted. It is found in the cell wall. The catalysed reaction is [(1-&gt;4)-alpha-D-galacturonosyl methyl ester](n) + n H2O = [(1-&gt;4)-alpha-D-galacturonosyl](n) + n methanol + n H(+). It participates in glycan metabolism; pectin degradation; 2-dehydro-3-deoxy-D-gluconate from pectin: step 1/5. Functionally, acts in the modification of cell walls via demethylesterification of cell wall pectin. This chain is Probable pectinesterase/pectinesterase inhibitor 6 (PME6), found in Arabidopsis thaliana (Mouse-ear cress).